A 110-amino-acid chain; its full sequence is Protein RnfH (110 aa).

The interval 86–110 (RQRRVEKTRKAGSIEGRRWQNKDSR) is disordered. The span at 100-110 (EGRRWQNKDSR) shows a compositional bias: basic and acidic residues.

It belongs to the UPF0125 (RnfH) family.

The polypeptide is Protein RnfH (Paraburkholderia xenovorans (strain LB400)).